The primary structure comprises 320 residues: Malate dehydrogenase (320 aa).

NAD(+) is bound by residues 10-15 (GSGMIG) and Asp-34. The substrate site is built by Arg-83 and Arg-89. NAD(+) is bound by residues Asn-96 and 119 to 121 (ITN). Substrate is bound by residues Asn-121 and Arg-152. Residue His-176 is the Proton acceptor of the active site.

This sequence belongs to the LDH/MDH superfamily. MDH type 3 family.

It carries out the reaction (S)-malate + NAD(+) = oxaloacetate + NADH + H(+). In terms of biological role, catalyzes the reversible oxidation of malate to oxaloacetate. This is Malate dehydrogenase from Allorhizobium ampelinum (strain ATCC BAA-846 / DSM 112012 / S4) (Agrobacterium vitis (strain S4)).